The primary structure comprises 1649 residues: DNA-directed RNA polymerase subunit beta' (1649 aa).

Residues cysteine 63, cysteine 65, cysteine 78, and cysteine 81 each coordinate Zn(2+). Positions 747, 749, and 751 each coordinate Mg(2+). Cysteine 1078, cysteine 1269, cysteine 1276, and cysteine 1279 together coordinate Zn(2+).

Belongs to the RNA polymerase beta' chain family. As to quaternary structure, the RNAP catalytic core consists of 2 alpha, 1 beta, 1 beta' and 1 omega subunit. When a sigma factor is associated with the core the holoenzyme is formed, which can initiate transcription. Mg(2+) is required as a cofactor. It depends on Zn(2+) as a cofactor.

The enzyme catalyses RNA(n) + a ribonucleoside 5'-triphosphate = RNA(n+1) + diphosphate. Functionally, DNA-dependent RNA polymerase catalyzes the transcription of DNA into RNA using the four ribonucleoside triphosphates as substrates. The protein is DNA-directed RNA polymerase subunit beta' of Thermosipho melanesiensis (strain DSM 12029 / CIP 104789 / BI429).